We begin with the raw amino-acid sequence, 262 residues long: Nurim (262 aa).

Residues 1–4 (MAPA) are Nuclear-facing. Residues 5–28 (LLLVPAALASFILAFGTGVEFVRF) form a helical membrane-spanning segment. The Perinuclear space segment spans residues 29–58 (TSLRPLLGGIPESGGPDARQGWLAALQDQS). The helical transmembrane segment at 59 to 80 (ILVPLAWDLGLLLLFVGQHSLM) threads the bilayer. At 81 to 97 (ATETVKAWMSRYFGVLQ) the chain is on the nuclear side. A helical transmembrane segment spans residues 98-114 (RSLYVACTALALQLVMR). Residues 115–133 (YWEPVPRGPVLWEAQAEPW) are Perinuclear space-facing. Residues 134–164 (ATWVPLLCFVLHVISWLLIFSILLVFDYAEL) traverse the membrane as a helical segment. The Nuclear segment spans residues 165–191 (MGLKQVYYHVLGLGEPLALKSPRALRL). Residues 192–210 (FSHLRHPVCVELLTVLWVV) form a helical membrane-spanning segment. At 211–216 (PTLGTD) the chain is on the perinuclear space side. A helical membrane pass occupies residues 217–234 (RLLLALLLTLYLGLAHGL). Residues 235–262 (DQQDLRYLRAQLQRKLHLLSRPQDGEAE) are Nuclear-facing.

This sequence belongs to the nurim family.

The protein resides in the nucleus inner membrane. The polypeptide is Nurim (NRM) (Sus scrofa (Pig)).